We begin with the raw amino-acid sequence, 106 residues long: UPF0235 protein OCAR_4310/OCA5_c02140 (106 aa).

The protein belongs to the UPF0235 family.

The sequence is that of UPF0235 protein OCAR_4310/OCA5_c02140 from Afipia carboxidovorans (strain ATCC 49405 / DSM 1227 / KCTC 32145 / OM5) (Oligotropha carboxidovorans).